The primary structure comprises 910 residues: Harmonin (910 aa).

Residues 1 to 86 (MDRKVAREFR…LTPRRSRKLK (86 aa)) form an N-terminal domain region. 2 consecutive PDZ domains span residues 87 to 171 (EVRL…GLIP) and 211 to 295 (KVFI…AGRE). Residues 194-833 (GVRGGLGSPG…KAWNQGGDWI (640 aa)) are mediates interaction with MYO7B. Ser219 carries the phosphoserine modification. 2 coiled-coil regions span residues 299–377 (TDRE…WEED) and 417–482 (TIRK…DLEE). A disordered region spans residues 563-688 (VMPHPPSVNS…PPRGPGVSTI (126 aa)). The segment covering 564 to 582 (MPHPPSVNSPSKVPAPPVL) has biased composition (pro residues). The span at 583–596 (PSSGHVSSSSSPWV) shows a compositional bias: low complexity. Pro residues predominate over residues 599 to 611 (TPPPIPIPPPPSI). The segment covering 650–664 (NTHSGKPSSSPTTER) has biased composition (polar residues). The 88-residue stretch at 752-839 (DVRLLRIKKE…GDWIDLVVAV (88 aa)) folds into the PDZ 3 domain. Residues 890–910 (KSRERNQTDPSWRPASSAPSP) are disordered. Positions 899 to 910 (PSWRPASSAPSP) are enriched in low complexity.

Part of the IMAC/intermicrovillar adhesion complex/intermicrovillar tip-link complex composed of ANKS4B, MYO7B, USH1C, CDHR2 and CDHR5. Part of a complex composed of USH1C, USH1G and MYO7A. Interacts with F-actin. Interacts with USH2A. Interacts with SLC4A7. Interacts (via PDZ1 domain) with the C-terminus of USHBP1. Interacts (via N-terminus and PDZ 2 domain) with CDH23. Interacts with USH1G. Interacts with MYO7B. Interacts with CDHR2 and CDHR5; may mediate their interaction with MYO7B at the microvilli tip. Interacts (via PDZ 1 domain) with ANKS4B. Interacts (via PDZ 1 domain) with DOCK4. Detected in stereocilia of cochlear hair cells (at protein level). Isoform 1 is expressed in the eye, cochlea, vestibule, heart, kidney, small intestine and testis; it is barely visible in skeletal muscle, liver, and lung and is absent from the brain. Isoforms 2 and 3 are expressed in the cochlea and vestibule.

It localises to the cytoplasm. The protein localises to the cytosol. It is found in the cytoskeleton. Its subcellular location is the cell projection. The protein resides in the microvillus. Functionally, anchoring/scaffolding protein that is a part of the functional network formed by USH1C, USH1G, CDH23 and MYO7A that mediates mechanotransduction in cochlear hair cells. Required for normal development and maintenance of cochlear hair cell bundles. As part of the intermicrovillar adhesion complex/IMAC plays a role in brush border differentiation, controlling microvilli organization and length. Probably plays a central regulatory role in the assembly of the complex, recruiting CDHR2, CDHR5 and MYO7B to the microvilli tips. This is Harmonin (Ush1c) from Mus musculus (Mouse).